The primary structure comprises 118 residues: T cell receptor gamma variable 2 (118 aa).

The signal sequence occupies residues 1-17 (MQWALAVLLAFLSPASQ). Residues 18–118 (KSSNLEGRTK…GVYYCATWDG (101 aa)) form the Ig-like domain. Cys41 and Cys113 form a disulfide bridge.

As to quaternary structure, gamma-delta TR is a heterodimer composed of a gamma and delta chain; disulfide-linked. The gamma-delta TR is associated with the transmembrane signaling CD3 coreceptor proteins following the stoichiometry: a single gamma-delta TR heterodimer associates with one CD3D-CD3E heterodimer, one CD3G-CD3E heterodimer and one CD247 homodimer forming a stable octameric structure. Upon activation, gamma-delta TR complex associates with FCER1G to initiate intracellular signaling.

Its subcellular location is the cell membrane. V region of the variable domain of T cell receptor (TR) gamma chain that participates in the antigen recognition. Gamma-delta TRs recognize a variety of self and foreign non-peptide antigens frequently expressed at the epithelial boundaries between the host and external environment, including endogenous lipids presented by MH-like protein CD1D and phosphoantigens presented by butyrophilin-like molecule BTN3A1. Upon antigen recognition induces rapid, innate-like immune responses involved in pathogen clearance and tissue repair. Binding of gamma-delta TR complex to antigen triggers phosphorylation of immunoreceptor tyrosine-based activation motifs (ITAMs) in the CD3 chains by the LCK and FYN kinases, allowing the recruitment, phosphorylation, and activation of ZAP70 that facilitates phosphorylation of the scaffolding proteins LCP2 and LAT. This lead to the formation of a supramolecular signalosome that recruits the phospholipase PLCG1, resulting in calcium mobilization and ERK activation, ultimately leading to T cell expansion and differentiation into effector cells. Gamma-delta TRs are produced through somatic rearrangement of a limited repertoire of variable (V), diversity (D), and joining (J) genes. The potential diversity of gamma-delta TRs is conferred by the unique ability to rearrange (D) genes in tandem and to utilize all three reading frames. The combinatorial diversity is considerably increased by the sequence exonuclease trimming and random nucleotide (N) region additions which occur during the V-(D)-J rearrangements. This is T cell receptor gamma variable 2 from Homo sapiens (Human).